The sequence spans 376 residues: Phosphatidylinositol/phosphatidylcholine transfer protein SFH11 (376 aa).

Basic and acidic residues predominate over residues 1-20 (MQETDRDIHISDGTMNKEEQ). The interval 1 to 24 (MQETDRDIHISDGTMNKEEQSPNN) is disordered. The 175-residue stretch at 92 to 266 (EYGEVKKHYP…FLGGNCTCSD (175 aa)) folds into the CRAL-TRIO domain. A coiled-coil region spans residues 323-357 (MEKYAALKTAVKDSQKRIEMLEISLHETKKVLNGL).

This sequence belongs to the SFH family.

It localises to the golgi apparatus membrane. It is found in the cell membrane. Functionally, required for transport of secretory proteins from the Golgi complex. Catalyzes the transfer of phosphatidylinositol and phosphatidylcholine between membranes in vitro. In Arabidopsis thaliana (Mouse-ear cress), this protein is Phosphatidylinositol/phosphatidylcholine transfer protein SFH11 (SFH11).